A 785-amino-acid chain; its full sequence is Endonuclease MutS2 (785 aa).

Position 334–341 (334–341) interacts with ATP; the sequence is GPNTGGKT. The Smr domain maps to 710–785; it reads LDLRGKRYEE…GNGATIVHFK (76 aa).

Belongs to the DNA mismatch repair MutS family. MutS2 subfamily. In terms of assembly, homodimer. Binds to stalled ribosomes, contacting rRNA.

Its function is as follows. Endonuclease that is involved in the suppression of homologous recombination and thus may have a key role in the control of bacterial genetic diversity. Functionally, acts as a ribosome collision sensor, splitting the ribosome into its 2 subunits. Detects stalled/collided 70S ribosomes which it binds and splits by an ATP-hydrolysis driven conformational change. Acts upstream of the ribosome quality control system (RQC), a ribosome-associated complex that mediates the extraction of incompletely synthesized nascent chains from stalled ribosomes and their subsequent degradation. Probably generates substrates for RQC. This chain is Endonuclease MutS2, found in Pediococcus pentosaceus (strain ATCC 25745 / CCUG 21536 / LMG 10740 / 183-1w).